The sequence spans 400 residues: Tyrosine-specific transport system 1 (400 aa).

The next 12 membrane-spanning stretches (helical) occupy residues 5-25, 34-54, 80-100, 117-137, 143-163, 176-196, 211-231, 250-270, 273-293, 313-333, 335-355, and 370-390; these read VGSTLLVAGTMIGAGMLAMPL, FTLVLLLGLWALLTFSALLFV, IIATAVLIIFLYALIAAYISG, VSVLLFTVIFGSFIVIGTHSV, VLFFVMLAAFAVVLSLMLPEI, ALIISASPVFFTAFGFHGSIP, FSILVGSAITLCAYILWQLST, LNGLVKATFAITGSNVIASAV, FSTLALITSFLGVGLGLLECI, LTFIPPLVFALFYPEGFILAL, YAGQMFAFYAVVLPVSLVWKA, and NLTLIIVLVLGVLITSIPFAI.

This sequence belongs to the amino acid/polyamine transporter 2 family. Mtr/TnaB/TyrP permease subfamily.

The protein localises to the cell inner membrane. The catalysed reaction is L-tyrosine(in) + H(+)(in) = L-tyrosine(out) + H(+)(out). Transports tyrosine across the cytoplasmic membrane. The transport system is energized by the proton motive force. This is Tyrosine-specific transport system 1 (tyrP-A) from Haemophilus influenzae (strain ATCC 51907 / DSM 11121 / KW20 / Rd).